Here is a 190-residue protein sequence, read N- to C-terminus: Potassium-transporting ATPase KdpC subunit (190 aa).

A helical membrane pass occupies residues 10 to 30 (TFLFLLLITGGVYPLLTTALG).

This sequence belongs to the KdpC family. The system is composed of three essential subunits: KdpA, KdpB and KdpC.

The protein localises to the cell inner membrane. Its function is as follows. Part of the high-affinity ATP-driven potassium transport (or Kdp) system, which catalyzes the hydrolysis of ATP coupled with the electrogenic transport of potassium into the cytoplasm. This subunit acts as a catalytic chaperone that increases the ATP-binding affinity of the ATP-hydrolyzing subunit KdpB by the formation of a transient KdpB/KdpC/ATP ternary complex. The chain is Potassium-transporting ATPase KdpC subunit from Shigella flexneri serotype 5b (strain 8401).